Consider the following 601-residue polypeptide: Glutamine--tRNA ligase (601 aa).

Residues 76–86 (PEPNGYLHIGH) carry the 'HIGH' region motif. ATP-binding positions include 77-79 (EPN) and 83-89 (HIGHAKS). L-glutamine contacts are provided by aspartate 109 and tyrosine 253. Residues threonine 272, 301–302 (RL), and 309–311 (MSK) each bind ATP. Positions 308–312 (VMSKR) match the 'KMSKS' region motif.

This sequence belongs to the class-I aminoacyl-tRNA synthetase family. In terms of assembly, monomer.

The protein localises to the cytoplasm. It catalyses the reaction tRNA(Gln) + L-glutamine + ATP = L-glutaminyl-tRNA(Gln) + AMP + diphosphate. The chain is Glutamine--tRNA ligase from Rhodopirellula baltica (strain DSM 10527 / NCIMB 13988 / SH1).